The sequence spans 64 residues: Alpha-conotoxin GI (64 aa).

Residues 1–21 (MGMRMMFTVFLLVVLATTVVS) form the signal peptide. Positions 22–49 (FPSERASDGRDDTAKDEGSDMDKLVEKK) are excised as a propeptide. Intrachain disulfides connect cysteine 51-cysteine 56 and cysteine 52-cysteine 62. Cysteine amide is present on cysteine 62.

This sequence belongs to the conotoxin A superfamily. Not hydroxylated; hydroxylation, on a synthetic hydroxylated GI, improves its folding but impairs its activity against target receptors. As to expression, expressed by the venom duct.

It localises to the secreted. In terms of biological role, alpha-conotoxins act on postsynaptic membranes, they bind to the nicotinic acetylcholine receptors (nAChR) and thus inhibit them. Reversibly inhibits mammalian muscle nAChR (IC(50)=339 nM on adult subtype (alpha-1-beta-1-gamma-delta/CHRNA1-CHRNB1-CHRNG-CHRND) and IC(50)=5.86-995 nM on fetal subtype (alpha-1-beta-1-delta-epsilon/CHRNA1-CHRNB1-CHRND-CHRNE)). The higher affinity site is the alpha/delta site on mouse muscle-derived BC3H-1 receptor, and the other site (alpha/gamma site) on nicotinic receptors from Torpedo californica electric organ. This is Alpha-conotoxin GI from Conus geographus (Geography cone).